The primary structure comprises 183 residues: Adenine phosphoribosyltransferase (183 aa).

Belongs to the purine/pyrimidine phosphoribosyltransferase family. As to quaternary structure, homodimer.

The protein localises to the cytoplasm. It carries out the reaction AMP + diphosphate = 5-phospho-alpha-D-ribose 1-diphosphate + adenine. Its pathway is purine metabolism; AMP biosynthesis via salvage pathway; AMP from adenine: step 1/1. Catalyzes a salvage reaction resulting in the formation of AMP, that is energically less costly than de novo synthesis. The chain is Adenine phosphoribosyltransferase from Edwardsiella ictaluri (strain 93-146).